A 128-amino-acid chain; its full sequence is Large ribosomal subunit protein eL8 (128 aa).

Belongs to the eukaryotic ribosomal protein eL8 family. As to quaternary structure, part of the 50S ribosomal subunit. Probably part of the RNase P complex.

The protein resides in the cytoplasm. Its function is as follows. Multifunctional RNA-binding protein that recognizes the K-turn motif in ribosomal RNA, the RNA component of RNase P, box H/ACA, box C/D and box C'/D' sRNAs. The polypeptide is Large ribosomal subunit protein eL8 (Staphylothermus marinus (strain ATCC 43588 / DSM 3639 / JCM 9404 / F1)).